Consider the following 473-residue polypeptide: IVTKTSFLSFEISELVKKNVGYITQIIGPVLDVASSPGKMPNIYNSLIIKGQNSAGQELNVTCEVQQLLGNNEVRAVAMSATDGLTRGMGAVDTGAPLSVPVGETTLGRISNVLGEPVDNLGPVQSSTTFPIHRSAPAFIQLDTKLSIFETGIKVVDLSAPYRRGGKIGLFGGAGVGKTVLITELINNIAKAHGGVSVSGGVGERTREGNDPYMEMKESKVINEQNISESKVALVYGQMNEPPGASMRVGSTASTMAEYFRDVNKQDVLPFIDYILRFVQAGSEVSALLGRMPSAVGYQPTLGTEMGSSQERITSTKDGSITSIQAVYVPADDLTDPAPATTSAHLDATTVLSRGLAAKGIYPAVDPLDSTSTMSQPWIVGEEHYETAQGVKQTSQRYKELQDIIAILGLDELSEEDRLTVARARKIERFSSQPSFVAEVFTGSPGKYVSLPETIKGFQMILPGELDNLPEQA.

Residue 172-179 (GGAGVGKT) participates in ATP binding.

The protein belongs to the ATPase alpha/beta chains family. In terms of assembly, F-type ATPases have 2 components, CF(1) - the catalytic core - and CF(0) - the membrane proton channel. CF(1) has five subunits: alpha(3), beta(3), gamma(1), delta(1), epsilon(1). CF(0) has four main subunits: a(1), b(1), b'(1) and c(9-12).

Its subcellular location is the plastid. It is found in the chloroplast thylakoid membrane. The enzyme catalyses ATP + H2O + 4 H(+)(in) = ADP + phosphate + 5 H(+)(out). Its function is as follows. Produces ATP from ADP in the presence of a proton gradient across the membrane. The catalytic sites are hosted primarily by the beta subunits. This is ATP synthase subunit beta, chloroplastic from Pteridium esculentum (Bracken fern).